Reading from the N-terminus, the 347-residue chain is D-alanine--D-alanine ligase (347 aa).

The ATP-grasp domain maps to 138-339 (KILCSHAGIP…YSQVIETILA (202 aa)). 171–226 (SDRFTFPLFVKPVDAGSSFGCTFVDFFEQLPVAIEHALQHGKSAIVEPALDAPEVF) is an ATP binding site. Mg(2+) contacts are provided by Asp-296, Glu-308, and Asn-310.

Belongs to the D-alanine--D-alanine ligase family. Mg(2+) serves as cofactor. Requires Mn(2+) as cofactor.

The protein localises to the cytoplasm. The catalysed reaction is 2 D-alanine + ATP = D-alanyl-D-alanine + ADP + phosphate + H(+). The protein operates within cell wall biogenesis; peptidoglycan biosynthesis. Its function is as follows. Cell wall formation. This is D-alanine--D-alanine ligase from Tropheryma whipplei (strain Twist) (Whipple's bacillus).